The primary structure comprises 217 residues: NADPH-dependent 3-demethoxyubiquinone 3-hydroxylase, mitochondrial (217 aa).

The transit peptide at 1–23 (MSAAGAIAAASVGRLRTGVRRPF) directs the protein to the mitochondrion. 2 tandem repeats follow at residues 48-129 (AVDR…TALL) and 130-217 (GKEG…SERF). The interval 48–217 (AVDRIIRVDH…SAAIYLSERF (170 aa)) is 2 X approximate tandem repeats. Residue Arg51 coordinates NADH. Fe cation-binding residues include Glu60, Glu90, His93, Glu142, Glu178, and His181. The NADH site is built by Tyr212 and Arg216.

It belongs to the COQ7 family. Component of a multi-subunit COQ enzyme complex. Interacts with COQ8B and COQ6. Interacts with COQ9. Requires Fe cation as cofactor. Highly expressed in tissues with high energy demand such as heart, muscle, liver, and kidney.

The protein resides in the mitochondrion inner membrane. It carries out the reaction a 5-methoxy-2-methyl-3-(all-trans-polyprenyl)benzoquinone + NADH + O2 = a 3-demethylubiquinone + NAD(+) + H2O. The protein operates within cofactor biosynthesis; ubiquinone biosynthesis. Functionally, catalyzes the hydroxylation of the 5-methoxy-2-methyl-3-(all-trans-polyprenyl)benzoquinone at the C6 position and participates in the biosynthesis of ubiquinone. Catalyzes the reaction through a substrate-mediated reduction pathway, whereby NADH shuttles electrons to 5-methoxy-2-methyl-3-(all-trans-decaprenyl)benzoquinone, which then transfers the electrons to the two Fe(3+) centers. The binding of 5-methoxy-2-methyl-3-(all-trans-polyprenyl)benzoquinone (DMQn) mediates reduction of the diiron center by nicotinamide adenine dinucleotide (NADH) and initiates oxygen activation for subsequent DMQ hydroxylation. The physiological substrates are 5-methoxy-2-methyl-3-(all-trans-nonaprenyl)benzoquinone (DMQ(9)) and 5-methoxy-2-methyl-3-(all-trans-decaprenyl)benzoquinone (DMQ(10)), however in vitro the enzyme does not have any specificity concerning the length of the polyprenyl tail, and accepts tails of various lengths with similar efficiency. Also has a structural role in the COQ enzyme complex, stabilizing other COQ polypeptides. Involved in lifespan determination in a ubiquinone-independent manner. Plays a role in modulating mitochondrial stress responses, acting in the nucleus, perhaps via regulating gene expression, independent of its characterized mitochondrial function in ubiquinone biosynthesis. This chain is NADPH-dependent 3-demethoxyubiquinone 3-hydroxylase, mitochondrial, found in Mus musculus (Mouse).